The primary structure comprises 205 residues: Large ribosomal subunit protein uL3 (205 aa).

The protein belongs to the universal ribosomal protein uL3 family. In terms of assembly, part of the 50S ribosomal subunit. Forms a cluster with proteins L14 and L19.

Functionally, one of the primary rRNA binding proteins, it binds directly near the 3'-end of the 23S rRNA, where it nucleates assembly of the 50S subunit. This is Large ribosomal subunit protein uL3 from Thermosipho melanesiensis (strain DSM 12029 / CIP 104789 / BI429).